The primary structure comprises 313 residues: MPKIKSAASGRRRERQQQRGQLKSAGGLMFNTGIGQHILKNPLIVNSIIDKAALRPTDVVLEVGPGTGNMTVKLLEKAKKVIACELDPRLVAELHKRVQGTPLASKLQVMVGDVLKADLPFFDACVANLPYQISSPFVFKLLLHRPFFRCAVLMFQREFALRLVAKPGDKLYCRLSINTQLLARVDHLMKVGKNNFRPPPKVESSVVRIEPKNPPPPINFQEWDGLVRITFVRKNKTLSAAFKSSAVQQLLEKNYRIHCSVHNIIIPEDFSIADKIQQILTSTGFSDKRARSMDIDDFIRLLHGFNAEGIHFS.

A disordered region spans residues 1-22 (MPKIKSAASGRRRERQQQRGQL). Positions 37, 39, 64, 85, 113, and 128 each coordinate S-adenosyl-L-methionine.

It belongs to the class I-like SAM-binding methyltransferase superfamily. rRNA adenine N(6)-methyltransferase family. Part of the small subunit (SSU) processome, composed of more than 70 proteins and the RNA chaperone small nucleolar RNA (snoRNA) U3.

Its subcellular location is the nucleus. It is found in the nucleoplasm. It localises to the nucleolus. The enzyme catalyses adenosine(1779)/adenosine(1780) in 18S rRNA + 4 S-adenosyl-L-methionine = N(6)-dimethyladenosine(1779)/N(6)-dimethyladenosine(1780) in 18S rRNA + 4 S-adenosyl-L-homocysteine + 4 H(+). Its function is as follows. Specifically dimethylates two adjacent adenosines in the loop of a conserved hairpin near the 3'-end of 18S rRNA in the 40S particle. Involved in the pre-rRNA processing steps leading to small-subunit rRNA production independently of its RNA-modifying catalytic activity. Part of the small subunit (SSU) processome, first precursor of the small eukaryotic ribosomal subunit. During the assembly of the SSU processome in the nucleolus, many ribosome biogenesis factors, an RNA chaperone and ribosomal proteins associate with the nascent pre-rRNA and work in concert to generate RNA folding, modifications, rearrangements and cleavage as well as targeted degradation of pre-ribosomal RNA by the RNA exosome. This Bos taurus (Bovine) protein is Dimethyladenosine transferase (DIMT1).